Here is a 166-residue protein sequence, read N- to C-terminus: NADH-ubiquinone oxidoreductase chain 6 (166 aa).

The next 6 helical transmembrane spans lie at 4 to 24 (FFSLVLVFLVLSVVVLGVVSA), 27 to 47 (QGVVALMGVSFFCCIFMVFLG), 50 to 70 (FAALVMYIVYLGGLVVVFGYC), 82 to 102 (VGGTKYFIVCVSLLLVVLLCL), 109 to 129 (LLVYVNWGDLVCLEMNGVGVF), and 135 to 155 (WGLIVCSWGLLVVLFSILVIL).

This sequence belongs to the complex I subunit 6 family.

Its subcellular location is the mitochondrion membrane. It carries out the reaction a ubiquinone + NADH + 5 H(+)(in) = a ubiquinol + NAD(+) + 4 H(+)(out). Functionally, core subunit of the mitochondrial membrane respiratory chain NADH dehydrogenase (Complex I) that is believed to belong to the minimal assembly required for catalysis. Complex I functions in the transfer of electrons from NADH to the respiratory chain. The immediate electron acceptor for the enzyme is believed to be ubiquinone. This is NADH-ubiquinone oxidoreductase chain 6 (MT-ND6) from Lycodon semicarinatus (Ryukyu odd-tooth snake).